The sequence spans 712 residues: Polyribonucleotide nucleotidyltransferase (712 aa).

Mg(2+) is bound by residues Asp-484 and Asp-490. One can recognise a KH domain in the interval 551–610; that stretch reads PKVFTIQIHPDKIRDIIGPGGKVIRAIQAETGTRVDVDDSGLVKVSAVNLEEGEAALQMI. The 69-residue stretch at 620-688 folds into the S1 motif domain; sequence GAVYEGTVVK…KDGKIRLSRK (69 aa). The disordered stretch occupies residues 689-712; sequence ALLEEENGKSGPENGAPQRDKNRH.

The protein belongs to the polyribonucleotide nucleotidyltransferase family. It depends on Mg(2+) as a cofactor.

It localises to the cytoplasm. The enzyme catalyses RNA(n+1) + phosphate = RNA(n) + a ribonucleoside 5'-diphosphate. Its function is as follows. Involved in mRNA degradation. Catalyzes the phosphorolysis of single-stranded polyribonucleotides processively in the 3'- to 5'-direction. This Desulfatibacillum aliphaticivorans protein is Polyribonucleotide nucleotidyltransferase.